The primary structure comprises 262 residues: Regulatory protein RecX (262 aa).

This sequence belongs to the RecX family.

The protein resides in the cytoplasm. Its function is as follows. Modulates RecA activity. This is Regulatory protein RecX from Photobacterium profundum (strain SS9).